The following is a 314-amino-acid chain: GATA zinc finger domain-containing protein 19 (314 aa).

This Dictyostelium discoideum (Social amoeba) protein is GATA zinc finger domain-containing protein 19 (gtaS).